The following is a 1392-amino-acid chain: DNA-directed RNA polymerase subunit beta (1392 aa).

This sequence belongs to the RNA polymerase beta chain family. As to quaternary structure, the RNAP catalytic core consists of 2 alpha, 1 beta, 1 beta' and 1 omega subunit. When a sigma factor is associated with the core the holoenzyme is formed, which can initiate transcription.

The enzyme catalyses RNA(n) + a ribonucleoside 5'-triphosphate = RNA(n+1) + diphosphate. In terms of biological role, DNA-dependent RNA polymerase catalyzes the transcription of DNA into RNA using the four ribonucleoside triphosphates as substrates. This chain is DNA-directed RNA polymerase subunit beta, found in Neisseria gonorrhoeae (strain NCCP11945).